The sequence spans 226 residues: Uracil-DNA glycosylase (226 aa).

Catalysis depends on Asp-65, which acts as the Proton acceptor.

The protein belongs to the uracil-DNA glycosylase (UDG) superfamily. UNG family.

The protein localises to the cytoplasm. It carries out the reaction Hydrolyzes single-stranded DNA or mismatched double-stranded DNA and polynucleotides, releasing free uracil.. In terms of biological role, excises uracil residues from the DNA which can arise as a result of misincorporation of dUMP residues by DNA polymerase or due to deamination of cytosine. In Enterococcus faecalis (strain ATCC 700802 / V583), this protein is Uracil-DNA glycosylase.